The sequence spans 441 residues: Serine carboxypeptidase-like 2 (441 aa).

The first 29 residues, 1–29 (MANKYFSSVLKSLLLLLHLVFLSKQHVDS), serve as a signal peptide directing secretion. Cystine bridges form between C88-C331, C252-C266, and C290-C297. An N-linked (GlcNAc...) asparagine glycan is attached at N109. The active site involves S184. N350 carries an N-linked (GlcNAc...) asparagine glycan. The active site involves D366. The N-linked (GlcNAc...) asparagine glycan is linked to N382. The active site involves H419.

Belongs to the peptidase S10 family. Expressed in seedlings and roots.

It localises to the secreted. Probable carboxypeptidase. This is Serine carboxypeptidase-like 2 (SCPL2) from Arabidopsis thaliana (Mouse-ear cress).